A 237-amino-acid chain; its full sequence is Ribonuclease 3 (237 aa).

The RNase III domain maps to 3–133 (SRQPLLDALG…LLGAIYLQHG (131 aa)). E43 serves as a coordination point for Mg(2+). Residue D47 is part of the active site. 2 residues coordinate Mg(2+): D119 and E122. The active site involves E122. One can recognise a DRBM domain in the interval 160–228 (DWKTSLQELT…AAATWKALDV (69 aa)).

It belongs to the ribonuclease III family. Homodimer. Mg(2+) is required as a cofactor.

It localises to the cytoplasm. The enzyme catalyses Endonucleolytic cleavage to 5'-phosphomonoester.. Functionally, digests double-stranded RNA. Involved in the processing of primary rRNA transcript to yield the immediate precursors to the large and small rRNAs (23S and 16S). Processes some mRNAs, and tRNAs when they are encoded in the rRNA operon. Processes pre-crRNA and tracrRNA of type II CRISPR loci if present in the organism. The chain is Ribonuclease 3 from Mycolicibacterium paratuberculosis (strain ATCC BAA-968 / K-10) (Mycobacterium paratuberculosis).